The following is an 850-amino-acid chain: Envelope glycoprotein gp160 (850 aa).

A signal peptide spans 1–28; the sequence is METQTSWLSLWRWGLMIFGMLMICSARE. Topologically, residues 29 to 678 are extracellular; it reads NLWVTVYYGV…ISNWLWYIKI (650 aa). Cysteine 50 and cysteine 70 are oxidised to a cystine. Asparagine 84, asparagine 126, asparagine 133, asparagine 134, asparagine 139, asparagine 152, asparagine 156, asparagine 184, asparagine 193, asparagine 226, asparagine 230, asparagine 237, asparagine 258, asparagine 272, asparagine 285, asparagine 297, asparagine 327, asparagine 334, and asparagine 349 each carry an N-linked (GlcNAc...) asparagine; by host glycan. 5 cysteine pairs are disulfide-bonded: cysteine 115–cysteine 201, cysteine 122–cysteine 192, cysteine 127–cysteine 153, cysteine 214–cysteine 243, and cysteine 224–cysteine 235. The V1 stretch occupies residues 127-152; sequence CSDVNSNNSTDSNSSASNNSPEIMKN. The segment at 153–192 is V2; that stretch reads CSFNVTTEIRNKRKQEYALFYRQDVVPINSDNKSYILINC. The tract at residues 292–325 is V3; the sequence is CTRPNNNTRKGIHMGPGQVLYATGEIIGDIRKAY. A disulfide bridge links cysteine 292 with cysteine 326. Residues 357-367 are CD4-binding loop; that stretch reads PSGGDIEITTH. Intrachain disulfides connect cysteine 371/cysteine 436 and cysteine 378/cysteine 409. Positions 378–409 are V4; it reads CNTSTLFNSSWDENNIKDTNSTNDNTTITIPC. Asparagine 379, asparagine 385, asparagine 397, asparagine 402, asparagine 433, asparagine 439, asparagine 453, and asparagine 457 each carry an N-linked (GlcNAc...) asparagine; by host glycan. The segment at 447–467 is disordered; sequence RDGGNRNGSENGTETFRPTGG. Residues 453-462 show a composition bias toward polar residues; it reads NGSENGTETF. V5 regions lie at residues 453–465 and 454–465; these read NGSENGTETFRPT and GSENGTETFRPT. Residues 506–526 form a fusion peptide region; sequence AVGIGAVFLGFLGTAGSTMGA. The interval 568–586 is immunosuppression; sequence KQLQARVLAVERYLKDQQL. The cysteines at positions 592 and 598 are disulfide-linked. Residues asparagine 605, asparagine 610, asparagine 619, asparagine 631, and asparagine 668 are each glycosylated (N-linked (GlcNAc...) asparagine; by host). A coiled-coil region spans residues 627–661; the sequence is REINNYTGIIYSLIEEAQNQQETNEKDLLALDKWT. An MPER; binding to GalCer region spans residues 656–677; it reads ALDKWTNLWNWFNISNWLWYIK. The chain crosses the membrane as a helical span at residues 679–699; sequence FIMIIGGLIGLRIIFAVLAIV. Residues 700–850 lie on the Cytoplasmic side of the membrane; the sequence is NRVRQGYSPL…IRQGLERALL (151 aa). The YXXL motif; contains endocytosis signal motif lies at 706 to 709; the sequence is YSPL. A lipid anchor (S-palmitoyl cysteine; by host) is attached at cysteine 758. Positions 849–850 match the Di-leucine internalization motif motif; sequence LL.

Belongs to the HIV-1 env protein family. In terms of assembly, the mature envelope protein (Env) consists of a homotrimer of non-covalently associated gp120-gp41 heterodimers. The resulting complex protrudes from the virus surface as a spike. There seems to be as few as 10 spikes on the average virion. Interacts with host CD4, CCR5 and CXCR4. Gp120 also interacts with the C-type lectins CD209/DC-SIGN and CLEC4M/DC-SIGNR (collectively referred to as DC-SIGN(R)). Gp120 and gp41 interact with GalCer. Gp120 interacts with host ITGA4/ITGB7 complex; on CD4+ T-cells, this interaction results in rapid activation of integrin ITGAL/LFA-1, which facilitates efficient cell-to-cell spreading of HIV-1. Gp120 interacts with cell-associated heparan sulfate; this interaction increases virus infectivity on permissive cells and may be involved in infection of CD4- cells. The mature envelope protein (Env) consists of a homotrimer of non-covalently associated gp120-gp41 heterodimers. The resulting complex protrudes from the virus surface as a spike. There seems to be as few as 10 spikes on the average virion. Post-translationally, highly glycosylated by host. The high number of glycan on the protein is reffered to as 'glycan shield' because it contributes to hide protein sequence from adaptive immune system. Palmitoylation of the transmembrane protein and of Env polyprotein (prior to its proteolytic cleavage) is essential for their association with host cell membrane lipid rafts. Palmitoylation is therefore required for envelope trafficking to classical lipid rafts, but not for viral replication. In terms of processing, specific enzymatic cleavages in vivo yield mature proteins. Envelope glycoproteins are synthesized as an inactive precursor that is heavily N-glycosylated and processed likely by host cell furin in the Golgi to yield the mature SU and TM proteins. The cleavage site between SU and TM requires the minimal sequence [KR]-X-[KR]-R. About 2 of the 9 disulfide bonds of gp41 are reduced by P4HB/PDI, following binding to CD4 receptor.

It localises to the virion membrane. The protein localises to the host cell membrane. The protein resides in the host endosome membrane. Functionally, oligomerizes in the host endoplasmic reticulum into predominantly trimers. In a second time, gp160 transits in the host Golgi, where glycosylation is completed. The precursor is then proteolytically cleaved in the trans-Golgi and thereby activated by cellular furin or furin-like proteases to produce gp120 and gp41. Attaches the virus to the host lymphoid cell by binding to the primary receptor CD4. This interaction induces a structural rearrangement creating a high affinity binding site for a chemokine coreceptor like CXCR4 and/or CCR5. Acts as a ligand for CD209/DC-SIGN and CLEC4M/DC-SIGNR, which are respectively found on dendritic cells (DCs), and on endothelial cells of liver sinusoids and lymph node sinuses. These interactions allow capture of viral particles at mucosal surfaces by these cells and subsequent transmission to permissive cells. HIV subverts the migration properties of dendritic cells to gain access to CD4+ T-cells in lymph nodes. Virus transmission to permissive T-cells occurs either in trans (without DCs infection, through viral capture and transmission), or in cis (following DCs productive infection, through the usual CD4-gp120 interaction), thereby inducing a robust infection. In trans infection, bound virions remain infectious over days and it is proposed that they are not degraded, but protected in non-lysosomal acidic organelles within the DCs close to the cell membrane thus contributing to the viral infectious potential during DCs' migration from the periphery to the lymphoid tissues. On arrival at lymphoid tissues, intact virions recycle back to DCs' cell surface allowing virus transmission to CD4+ T-cells. In terms of biological role, acts as a class I viral fusion protein. Under the current model, the protein has at least 3 conformational states: pre-fusion native state, pre-hairpin intermediate state, and post-fusion hairpin state. During fusion of viral and target intracellular membranes, the coiled coil regions (heptad repeats) assume a trimer-of-hairpins structure, positioning the fusion peptide in close proximity to the C-terminal region of the ectodomain. The formation of this structure appears to drive apposition and subsequent fusion of viral and target cell membranes. Complete fusion occurs in host cell endosomes and is dynamin-dependent, however some lipid transfer might occur at the plasma membrane. The virus undergoes clathrin-dependent internalization long before endosomal fusion, thus minimizing the surface exposure of conserved viral epitopes during fusion and reducing the efficacy of inhibitors targeting these epitopes. Membranes fusion leads to delivery of the nucleocapsid into the cytoplasm. The chain is Envelope glycoprotein gp160 from Human immunodeficiency virus type 1 group M subtype J (isolate SE9173) (HIV-1).